A 437-amino-acid chain; its full sequence is MNYTTQMDAAKKGIVTKEMEIVAKKENMNVKDLMELVSKGKVAIPANKNHKSLDPEGIGQGLRTKINVNLGISKDCYNIDMELEKVQKAIDMKAEAIMDLSCFGKTEEFRKRLIDMSPAIIGTVPIYDAVGFYDKELKDITSEEFLKVAEKHAENGADFLTIHVGMNRKTAATFKKNPRRMNIVSRGGSLLYAWMELNNKENPFYEGFDKLLDICEKYDVTLSLGDACRPGCIEDSTDASQIEELIALGELTKRAWERNVQVIIEGPGHMTLDEIETNMKIEKKLCHGAPFYVLGPIVTDIAPGYDHITSAIGGAIAATHGADFLCYVTPAEHLRLPNLDDMKEGIIASKIAAHAADLAKGVKGARDWDNAMAKARRDLDWERMFELSIDEEKARRYREESKAKSKDSCTMCGKMCAVRNMNRVTEGKDLNMLRDDD.

Substrate-binding positions include asparagine 69, methionine 98, tyrosine 127, histidine 163, serine 185–glycine 187, aspartate 226–arginine 229, and glutamate 265. Histidine 269 serves as a coordination point for Zn(2+). Tyrosine 292 contacts substrate. Residue histidine 333 coordinates Zn(2+). Positions 409, 412, and 416 each coordinate [4Fe-4S] cluster.

It belongs to the ThiC family. Requires [4Fe-4S] cluster as cofactor.

The catalysed reaction is 5-amino-1-(5-phospho-beta-D-ribosyl)imidazole + S-adenosyl-L-methionine = 4-amino-2-methyl-5-(phosphooxymethyl)pyrimidine + CO + 5'-deoxyadenosine + formate + L-methionine + 3 H(+). The protein operates within cofactor biosynthesis; thiamine diphosphate biosynthesis. Its function is as follows. Catalyzes the synthesis of the hydroxymethylpyrimidine phosphate (HMP-P) moiety of thiamine from aminoimidazole ribotide (AIR) in a radical S-adenosyl-L-methionine (SAM)-dependent reaction. This chain is Phosphomethylpyrimidine synthase, found in Clostridium botulinum (strain ATCC 19397 / Type A).